A 341-amino-acid polypeptide reads, in one-letter code: S-adenosylmethionine:tRNA ribosyltransferase-isomerase (341 aa).

This sequence belongs to the QueA family. In terms of assembly, monomer.

The protein localises to the cytoplasm. It catalyses the reaction 7-aminomethyl-7-carbaguanosine(34) in tRNA + S-adenosyl-L-methionine = epoxyqueuosine(34) in tRNA + adenine + L-methionine + 2 H(+). Its pathway is tRNA modification; tRNA-queuosine biosynthesis. Transfers and isomerizes the ribose moiety from AdoMet to the 7-aminomethyl group of 7-deazaguanine (preQ1-tRNA) to give epoxyqueuosine (oQ-tRNA). The sequence is that of S-adenosylmethionine:tRNA ribosyltransferase-isomerase from Clostridium botulinum (strain Alaska E43 / Type E3).